The sequence spans 464 residues: UDP-N-acetylmuramoylalanine--D-glutamate ligase (464 aa).

Gly112–Thr118 is an ATP binding site.

The protein belongs to the MurCDEF family.

It localises to the cytoplasm. It catalyses the reaction UDP-N-acetyl-alpha-D-muramoyl-L-alanine + D-glutamate + ATP = UDP-N-acetyl-alpha-D-muramoyl-L-alanyl-D-glutamate + ADP + phosphate + H(+). It functions in the pathway cell wall biogenesis; peptidoglycan biosynthesis. Its function is as follows. Cell wall formation. Catalyzes the addition of glutamate to the nucleotide precursor UDP-N-acetylmuramoyl-L-alanine (UMA). In Chlorobium chlorochromatii (strain CaD3), this protein is UDP-N-acetylmuramoylalanine--D-glutamate ligase.